The chain runs to 1135 residues: Envelopment polyprotein (1135 aa).

Positions 1 to 18 (MGIWKWLVMASLVWPVLT) are cleaved as a signal peptide. Topologically, residues 19-485 (LRNVYDMKIE…VPGFHGWATA (467 aa)) are lumenal. Intrachain disulfides connect cysteine 29/cysteine 151, cysteine 63/cysteine 157, cysteine 109/cysteine 128, cysteine 133/cysteine 138, cysteine 175/cysteine 185, cysteine 210/cysteine 247, cysteine 234/cysteine 351, cysteine 376/cysteine 435, cysteine 380/cysteine 389, cysteine 405/cysteine 424, and cysteine 452/cysteine 475. Asparagine 134 is a glycosylation site (N-linked (GlcNAc...) asparagine; by host). 2 N-linked (GlcNAc...) asparagine; by host glycosylation sites follow: asparagine 235 and asparagine 347. Asparagine 399 carries an N-linked (GlcNAc...) asparagine; by host glycan. The chain crosses the membrane as a helical span at residues 486 to 506 (ALLVTFCFGWVLIPAITFIIL). Over 507-627 (TILKFIANIF…LNLFRYKSRC (121 aa)) the chain is Cytoplasmic. The segment at 516-533 (FHTSNQENRLKSVLRKIK) is binding to the ribonucleoprotein. 2 consecutive CCHC-type zinc fingers follow at residues 545-565 (CDVC…GVSC) and 570-591 (CPYC…YKVC). Binding to the ribonucleoprotein regions lie at residues 588 to 605 (YKVC…KKTV), 592 to 603 (QVTHRFRDDLKK), and 611 to 625 (TPGC…RYKS). An ITAM domain is found at 611 to 634 (TPGCYRTLNLFRYKSRCYIFTMWI). Residues 615–618 (YRTL) carry the YxxL motif. Residues 628–648 (YIFTMWIFLLVLESILWAASA) form a helical membrane-spanning segment. The Lumenal segment spans residues 649-1105 (SETPLTPVWN…EWISGIFSGN (457 aa)). Intrachain disulfides connect cysteine 735/cysteine 770, cysteine 739/cysteine 777, cysteine 751/cysteine 885, cysteine 765/cysteine 896, cysteine 780/cysteine 904, cysteine 806/cysteine 815, cysteine 823/cysteine 832, and cysteine 863/cysteine 867. The segment at 757-777 (YQYETSWGCNPSDCPGVGTGC) is fusion loop. N-linked (GlcNAc...) asparagine; by host glycosylation occurs at asparagine 928. Disulfide bonds link cysteine 970–cysteine 1000, cysteine 993–cysteine 1045, cysteine 1010–cysteine 1015, cysteine 1046–cysteine 1051, and cysteine 1085–cysteine 1089. Residues 1106–1126 (WIVLIVLCVFLLFSLVLLSIL) traverse the membrane as a helical segment. The interval 1122 to 1135 (LLSILCPVRKHKKS) is binding to the ribonucleoprotein. The Cytoplasmic segment spans residues 1127–1135 (CPVRKHKKS).

Belongs to the hantavirus envelope glycoprotein family. As to quaternary structure, homodimer. Homotetramer; forms heterotetrameric Gn-Gc spikes in the pre-fusion conformation. Interacts (via C-terminus) with the nucleoprotein. Interacts with host TUFM; this interaction contributes to the virus-induced degradation of mitochondria by autophagy, which leads to degradation of host MAVS and inhibition of type I interferon (IFN) responses. Interacts with host MAP1LC3B; this interaction contributes to the virus-induced degradation of mitochondria by autophagy, which leads to degradation of host MAVS and inhibition of type I interferon (IFN) responses. In terms of assembly, homodimer. Homotetramer; forms heterotetrameric Gn-Gc spikes in the pre-fusion conformation. Homotrimer; forms homotrimer in the post-fusion conformation at acidic pH. Interacts (via C-terminus) with the nucleoprotein. Post-translationally, envelope polyprotein precursor is quickly cleaved in vivo just after synthesis, presumably by host signal peptidase.

It localises to the virion membrane. The protein resides in the host cell surface. The protein localises to the host Golgi apparatus membrane. Its subcellular location is the host endoplasmic reticulum membrane. It is found in the host mitochondrion. Forms homotetramers with glycoprotein C at the surface of the virion. Attaches the virion to host cell receptors including integrin ITGAV/ITGB3. This attachment induces virion internalization predominantly through clathrin-dependent endocytosis. May also bind to host C1QBP for virus entry into the host cell. Mediates the assembly and budding of infectious virus particles through its interaction with the nucleocapsid protein and the viral genome. May dysregulate normal immune and endothelial cell responses through an ITAM motif. Translocates to mitochondria, binds to host TUFM and recruits MAP1LC3B. These interactions induce mitochondrial autophagy and therefore destruction of host MAVS leading to inhibition of type I interferon (IFN) responses. Concomitant breakdown of glycoprotein N is apparently prevented by the nucleoprotein that may inhibit Gn-stimulated autophagosome-lysosome fusion. Interacts with the viral genomic RNA. Functionally, forms homotetramers with glycoprotein N at the surface of the virion. Attaches the virion to host cell receptors including integrin ITGAV/ITGB3. This attachment induces virion internalization predominantly through clathrin-dependent endocytosis. May also bind to host C1QBP for virus entry into the host cell. Class II fusion protein that promotes fusion of viral membrane with host endosomal membrane after endocytosis of the virion. The polypeptide is Envelopment polyprotein (GP) (Hantaan virus (strain Lee) (Lee virus)).